Consider the following 321-residue polypeptide: Glucokinase (321 aa).

An ATP-binding site is contributed by 8–13; the sequence is GDVGGT.

The protein belongs to the bacterial glucokinase family.

It localises to the cytoplasm. It carries out the reaction D-glucose + ATP = D-glucose 6-phosphate + ADP + H(+). The chain is Glucokinase from Klebsiella pneumoniae (strain 342).